The chain runs to 99 residues: Aspartyl/glutamyl-tRNA(Asn/Gln) amidotransferase subunit C (99 aa).

Belongs to the GatC family. As to quaternary structure, heterotrimer of A, B and C subunits.

The catalysed reaction is L-glutamyl-tRNA(Gln) + L-glutamine + ATP + H2O = L-glutaminyl-tRNA(Gln) + L-glutamate + ADP + phosphate + H(+). It catalyses the reaction L-aspartyl-tRNA(Asn) + L-glutamine + ATP + H2O = L-asparaginyl-tRNA(Asn) + L-glutamate + ADP + phosphate + 2 H(+). Allows the formation of correctly charged Asn-tRNA(Asn) or Gln-tRNA(Gln) through the transamidation of misacylated Asp-tRNA(Asn) or Glu-tRNA(Gln) in organisms which lack either or both of asparaginyl-tRNA or glutaminyl-tRNA synthetases. The reaction takes place in the presence of glutamine and ATP through an activated phospho-Asp-tRNA(Asn) or phospho-Glu-tRNA(Gln). The protein is Aspartyl/glutamyl-tRNA(Asn/Gln) amidotransferase subunit C of Thermobifida fusca (strain YX).